Here is a 312-residue protein sequence, read N- to C-terminus: Malate dehydrogenase (312 aa).

Residues 7–12 (GAGNVG) and aspartate 32 contribute to the NAD(+) site. Substrate is bound by residues arginine 82 and arginine 88. NAD(+) is bound by residues asparagine 95 and 118-120 (VSN). Residues asparagine 120 and arginine 151 each coordinate substrate. Histidine 175 serves as the catalytic Proton acceptor.

Belongs to the LDH/MDH superfamily. MDH type 3 family.

The enzyme catalyses (S)-malate + NAD(+) = oxaloacetate + NADH + H(+). Its function is as follows. Catalyzes the reversible oxidation of malate to oxaloacetate. In Cytophaga hutchinsonii (strain ATCC 33406 / DSM 1761 / CIP 103989 / NBRC 15051 / NCIMB 9469 / D465), this protein is Malate dehydrogenase.